The following is a 272-amino-acid chain: tRNA pseudouridine synthase B (272 aa).

The active-site Nucleophile is aspartate 38.

Belongs to the pseudouridine synthase TruB family. Type 1 subfamily.

The catalysed reaction is uridine(55) in tRNA = pseudouridine(55) in tRNA. Its function is as follows. Responsible for synthesis of pseudouridine from uracil-55 in the psi GC loop of transfer RNAs. The protein is tRNA pseudouridine synthase B of Campylobacter jejuni subsp. jejuni serotype O:6 (strain 81116 / NCTC 11828).